Reading from the N-terminus, the 103-residue chain is N(4)-acetylcytidine amidohydrolase (103 aa).

An ASCH domain is found at 6 to 101; that stretch reads ITFFQRFQDD…QTQFYVIEFK (96 aa). Lysine 21 (proton acceptor) is an active-site residue. The active-site Nucleophile is threonine 24. The active-site Proton donor is glutamate 74.

Belongs to the N(4)-acetylcytidine amidohydrolase family.

The enzyme catalyses N(4)-acetylcytidine + H2O = cytidine + acetate + H(+). It carries out the reaction N(4)-acetyl-2'-deoxycytidine + H2O = 2'-deoxycytidine + acetate + H(+). It catalyses the reaction N(4)-acetylcytosine + H2O = cytosine + acetate + H(+). In terms of biological role, catalyzes the hydrolysis of N(4)-acetylcytidine (ac4C). In Escherichia coli O8 (strain IAI1), this protein is N(4)-acetylcytidine amidohydrolase (yqfB).